A 317-amino-acid chain; its full sequence is MQILLANPRGFCAGVDRAISIVERAIEMYGAPIYVRHEVVHNRYVVESLCERGAIFIEEISEVPDGSILIFSAHGVSQAVRAEARSRNLTMLFDATCPLVTKVHMEVARASRKGKEAILIGHAGHPEVEGTMGQYSNPNGGMYLVESPDDVWQLNVKDENNLCFMTQTTLSVDDTSAVIDALNTRFPKIVGPRKDDICYATTNRQEAVRNLANDADIVLVVGSKNSSNSNRLAELVQRMGKPAYLIDSAADIQEFWLQGAQCIGVTAGASAPDILVQQVIARLKDLGAGESIELSGREENIVFEVPKELRVEVKQID.

Cys-12 provides a ligand contact to [4Fe-4S] cluster. Residues His-41 and His-74 each coordinate (2E)-4-hydroxy-3-methylbut-2-enyl diphosphate. 2 residues coordinate dimethylallyl diphosphate: His-41 and His-74. Isopentenyl diphosphate contacts are provided by His-41 and His-74. [4Fe-4S] cluster is bound at residue Cys-97. His-125 is a binding site for (2E)-4-hydroxy-3-methylbut-2-enyl diphosphate. His-125 contributes to the dimethylallyl diphosphate binding site. Position 125 (His-125) interacts with isopentenyl diphosphate. The Proton donor role is filled by Glu-127. Thr-168 contributes to the (2E)-4-hydroxy-3-methylbut-2-enyl diphosphate binding site. Cys-198 is a [4Fe-4S] cluster binding site. (2E)-4-hydroxy-3-methylbut-2-enyl diphosphate-binding residues include Ser-226, Ser-227, Asn-228, and Ser-270. Residues Ser-226, Ser-227, Asn-228, and Ser-270 each coordinate dimethylallyl diphosphate. Isopentenyl diphosphate contacts are provided by Ser-226, Ser-227, Asn-228, and Ser-270.

The protein belongs to the IspH family. Homodimer. [4Fe-4S] cluster is required as a cofactor.

The catalysed reaction is isopentenyl diphosphate + 2 oxidized [2Fe-2S]-[ferredoxin] + H2O = (2E)-4-hydroxy-3-methylbut-2-enyl diphosphate + 2 reduced [2Fe-2S]-[ferredoxin] + 2 H(+). The enzyme catalyses dimethylallyl diphosphate + 2 oxidized [2Fe-2S]-[ferredoxin] + H2O = (2E)-4-hydroxy-3-methylbut-2-enyl diphosphate + 2 reduced [2Fe-2S]-[ferredoxin] + 2 H(+). The protein operates within isoprenoid biosynthesis; dimethylallyl diphosphate biosynthesis; dimethylallyl diphosphate from (2E)-4-hydroxy-3-methylbutenyl diphosphate: step 1/1. It functions in the pathway isoprenoid biosynthesis; isopentenyl diphosphate biosynthesis via DXP pathway; isopentenyl diphosphate from 1-deoxy-D-xylulose 5-phosphate: step 6/6. Functionally, catalyzes the conversion of 1-hydroxy-2-methyl-2-(E)-butenyl 4-diphosphate (HMBPP) into a mixture of isopentenyl diphosphate (IPP) and dimethylallyl diphosphate (DMAPP). Acts in the terminal step of the DOXP/MEP pathway for isoprenoid precursor biosynthesis. The chain is 4-hydroxy-3-methylbut-2-enyl diphosphate reductase from Yersinia pseudotuberculosis serotype IB (strain PB1/+).